We begin with the raw amino-acid sequence, 167 residues long: Endoribonuclease YbeY (167 aa).

Residues His132, His136, and His142 each coordinate Zn(2+).

It belongs to the endoribonuclease YbeY family. Zn(2+) serves as cofactor.

Its subcellular location is the cytoplasm. In terms of biological role, single strand-specific metallo-endoribonuclease involved in late-stage 70S ribosome quality control and in maturation of the 3' terminus of the 16S rRNA. This is Endoribonuclease YbeY from Clostridium beijerinckii (strain ATCC 51743 / NCIMB 8052) (Clostridium acetobutylicum).